A 192-amino-acid polypeptide reads, in one-letter code: Pyridoxal 5'-phosphate synthase subunit PdxT (192 aa).

46–48 contributes to the L-glutamine binding site; that stretch reads GES. Cys77 functions as the Nucleophile in the catalytic mechanism. L-glutamine is bound by residues Arg103 and 131 to 132; that span reads IR. Residues His167 and Glu169 each act as charge relay system in the active site.

It belongs to the glutaminase PdxT/SNO family. In the presence of PdxS, forms a dodecamer of heterodimers. Only shows activity in the heterodimer.

It carries out the reaction aldehydo-D-ribose 5-phosphate + D-glyceraldehyde 3-phosphate + L-glutamine = pyridoxal 5'-phosphate + L-glutamate + phosphate + 3 H2O + H(+). The catalysed reaction is L-glutamine + H2O = L-glutamate + NH4(+). It participates in cofactor biosynthesis; pyridoxal 5'-phosphate biosynthesis. In terms of biological role, catalyzes the hydrolysis of glutamine to glutamate and ammonia as part of the biosynthesis of pyridoxal 5'-phosphate. The resulting ammonia molecule is channeled to the active site of PdxS. The sequence is that of Pyridoxal 5'-phosphate synthase subunit PdxT from Exiguobacterium sibiricum (strain DSM 17290 / CCUG 55495 / CIP 109462 / JCM 13490 / 255-15).